A 470-amino-acid chain; its full sequence is MTTFMTKDFLLKNDIARTLYHKYAAPMPIYDFHCHLSPQEIADDRRFDNLGQIWLEGDHYKWRALRSAGVDESLITGKETSDYEKYMAWANTVPKTLGNPLYHWTHLELRRPFGITDTLFGPDTAESIWTQCNEKLATPAFSARGIMQQMNVRMVGTTDDPIDSLAYHRQIAADDSFGIEVAPSWRPDKAFKIELDGFVDYLGKLEAAADVNITRFDDLRRALTRRLDHFAACGCRAADHGIETLRFAPVPDDAQLDAILGKRLAGETLSELEIAQFTTAVLVWLGRQYAARGWVMQLHIGAIRNNNTRMFRLLGPDTGFDSIGDNNISWALSRLLDSMDVTNELPKTILYCLNPRDNEVLATMTGNFQGPGIAGKVQFGSGWWFNDQKDGMLRQLEQLSQMGLLSQFVGMLTDSRSFLSYTRHEYFRRILCNLLGQWAQDGEIPDDEAMLSRMVQDICFNNAQHYFAIK.

This sequence belongs to the metallo-dependent hydrolases superfamily. Uronate isomerase family.

The enzyme catalyses D-glucuronate = D-fructuronate. The catalysed reaction is aldehydo-D-galacturonate = keto-D-tagaturonate. Its pathway is carbohydrate metabolism; pentose and glucuronate interconversion. This Salmonella arizonae (strain ATCC BAA-731 / CDC346-86 / RSK2980) protein is Uronate isomerase.